Reading from the N-terminus, the 251-residue chain is Tryptophan synthase alpha chain (251 aa).

Active-site proton acceptor residues include Glu46 and Asp57.

It belongs to the TrpA family. Tetramer of two alpha and two beta chains.

It carries out the reaction (1S,2R)-1-C-(indol-3-yl)glycerol 3-phosphate + L-serine = D-glyceraldehyde 3-phosphate + L-tryptophan + H2O. Its pathway is amino-acid biosynthesis; L-tryptophan biosynthesis; L-tryptophan from chorismate: step 5/5. In terms of biological role, the alpha subunit is responsible for the aldol cleavage of indoleglycerol phosphate to indole and glyceraldehyde 3-phosphate. This Karelsulcia muelleri (strain GWSS) (Sulcia muelleri) protein is Tryptophan synthase alpha chain.